A 207-amino-acid polypeptide reads, in one-letter code: Casparian strip membrane protein 1 (207 aa).

Residues 1 to 12 (MEGESTAVNITE) show a composition bias toward polar residues. The tract at residues 1 to 24 (MEGESTAVNITETPKERKGKAPLL) is disordered. The Cytoplasmic portion of the chain corresponds to 1–48 (MEGESTAVNITETPKERKGKAPLLAPPPASGGIKTIVQKAPKGGYKRG). A helical transmembrane segment spans residues 49-69 (LAVFDVVLRIAGIAAALGAVI). Over 70 to 98 (AMGSTDQTLPFFTQFFQFKAEFDDLPVFT) the chain is Extracellular. The chain crosses the membrane as a helical span at residues 99–119 (FFVIANAITAAYLALSIPISI). At 120 to 138 (VCIIRPHLVGPRVLLTFLD) the chain is on the cytoplasmic side. The helical transmembrane segment at 139–159 (TVMVGLTTAAAGGAASIVYLA) threads the bilayer. Residues 160 to 184 (HNGNSDANWPAICQQFNDFCQEVSG) are Extracellular-facing. Residues 185-205 (AVVASFITVVVLMFLIVLSAF) traverse the membrane as a helical segment. At 206 to 207 (SL) the chain is on the cytoplasmic side.

This sequence belongs to the Casparian strip membrane proteins (CASP) family. As to quaternary structure, homodimer and heterodimers.

It is found in the cell membrane. Its function is as follows. Regulates membrane-cell wall junctions and localized cell wall deposition. Required for establishment of the Casparian strip membrane domain (CSD) and the subsequent formation of Casparian strips, a cell wall modification of the root endodermis that determines an apoplastic barrier between the intraorganismal apoplasm and the extraorganismal apoplasm and prevents lateral diffusion. In Taraxacum kok-saghyz (Russian dandelion), this protein is Casparian strip membrane protein 1.